Consider the following 432-residue polypeptide: Amino-acid acetyltransferase (432 aa).

The 140-residue stretch at Glu-286–Ser-425 folds into the N-acetyltransferase domain.

The protein belongs to the acetyltransferase family. ArgA subfamily.

The protein resides in the cytoplasm. It catalyses the reaction L-glutamate + acetyl-CoA = N-acetyl-L-glutamate + CoA + H(+). Its pathway is amino-acid biosynthesis; L-arginine biosynthesis; N(2)-acetyl-L-ornithine from L-glutamate: step 1/4. The chain is Amino-acid acetyltransferase from Pseudomonas aeruginosa (strain LESB58).